Consider the following 251-residue polypeptide: Aquaporin (251 aa).

Residues 1–11 (MAKEALKTLQS) are Cytoplasmic-facing. Residues 12-32 (MFGEMVASFVFGFAVYSAILG) form a helical membrane-spanning segment. Residues 33–42 (SSISQSSADK) lie on the Extracellular side of the membrane. Residues 43–63 (VIVGLTVGFSGIGVIYSFCDV) traverse the membrane as a helical segment. Residues 64 to 86 (TIAHFNPAITLAAILTSKIDVLQ) are Cytoplasmic-facing. The short motif at 69-71 (NPA) is the NPA element. The chain crosses the membrane as a helical span at residues 87 to 107 (GLGYMLAQYIGFMLAVCALLV). Residues 108–133 (CSPVEYKETLDTIRPGPTDFGATSLN) lie on the Extracellular side of the membrane. A helical membrane pass occupies residues 134 to 154 (VFFAEFFLTAIFVHIVFATAV). The Cytoplasmic portion of the chain corresponds to 155 to 179 (NPYKPKVDTEGKFVDPDEKEPVDRR). Residues 180–200 (ITAPLCIGLTLGFLAFMGLAS) traverse the membrane as a helical segment. At 201–224 (SGGAFNPGLTFAPMAMSNTWSHFW) the chain is on the extracellular side. The NPG signature appears at 206 to 208 (NPG). A helical membrane pass occupies residues 225–245 (IYLGGQYLGGLTGGLLQVLVL). Residues 246-251 (YKLSSD) lie on the Cytoplasmic side of the membrane.

The protein belongs to the MIP/aquaporin (TC 1.A.8) family.

It localises to the cell membrane. Water channel required to facilitate the transport of water across membranes. Involved in osmotolerance. This is Aquaporin (AQP) from Encephalitozoon intestinalis (Microsporidian parasite).